We begin with the raw amino-acid sequence, 281 residues long: Undecaprenyl-diphosphatase (281 aa).

A run of 8 helical transmembrane segments spans residues 5 to 25, 48 to 68, 92 to 112, 118 to 138, 154 to 174, 192 to 212, 226 to 246, and 261 to 281; these read LFVL…FLPI, VKMY…LLYW, FWFM…LLDA, LMTP…MIYA, VTPK…IPGM, VVAA…YSLL, AELI…VAVI, and FAIY…MGFF.

Belongs to the UppP family.

It is found in the cell membrane. The catalysed reaction is di-trans,octa-cis-undecaprenyl diphosphate + H2O = di-trans,octa-cis-undecaprenyl phosphate + phosphate + H(+). Catalyzes the dephosphorylation of undecaprenyl diphosphate (UPP). Confers resistance to bacitracin. In Ruminiclostridium cellulolyticum (strain ATCC 35319 / DSM 5812 / JCM 6584 / H10) (Clostridium cellulolyticum), this protein is Undecaprenyl-diphosphatase.